The sequence spans 236 residues: Calcium-binding lectin RapA2 (236 aa).

It localises to the secreted. Interacts specifically in a calcium-dependent manner with the acidic exopolysaccharide (EPS) and capsular polysaccharide produced by R.leguminosarum. Could be involved in the development of the biofilm matrix made of EPS. The protein is Calcium-binding lectin RapA2 of Rhizobium johnstonii (strain DSM 114642 / LMG 32736 / 3841) (Rhizobium leguminosarum bv. viciae).